A 103-amino-acid polypeptide reads, in one-letter code: Histone H4 variant TH091 (103 aa).

Residues Met1–Arg20 are disordered. Ser2 bears the N-acetylserine mark. An N6-acetyllysine mark is found at Lys6, Lys9, Lys13, Lys17, and Lys21. Residues Lys17–Lys21 mediate DNA binding.

It belongs to the histone H4 family. As to quaternary structure, the nucleosome is a histone octamer containing two molecules each of H2A, H2B, H3 and H4 assembled in one H3-H4 heterotetramer and two H2A-H2B heterodimers. The octamer wraps approximately 147 bp of DNA.

It localises to the nucleus. It is found in the chromosome. Functionally, core component of nucleosome. Nucleosomes wrap and compact DNA into chromatin, limiting DNA accessibility to the cellular machineries which require DNA as a template. Histones thereby play a central role in transcription regulation, DNA repair, DNA replication and chromosomal stability. DNA accessibility is regulated via a complex set of post-translational modifications of histones, also called histone code, and nucleosome remodeling. The polypeptide is Histone H4 variant TH091 (Triticum aestivum (Wheat)).